We begin with the raw amino-acid sequence, 514 residues long: 2,3-bisphosphoglycerate-independent phosphoglycerate mutase (514 aa).

Residues Asp12 and Ser62 each coordinate Mn(2+). The Phosphoserine intermediate role is filled by Ser62. Residues His123, 153-154 (RD), Arg185, Arg191, 260-263 (RPDR), and Lys335 each bind substrate. Residues Asp402, His406, Asp443, His444, and His462 each contribute to the Mn(2+) site.

It belongs to the BPG-independent phosphoglycerate mutase family. Monomer. Mn(2+) serves as cofactor.

The catalysed reaction is (2R)-2-phosphoglycerate = (2R)-3-phosphoglycerate. Its pathway is carbohydrate degradation; glycolysis; pyruvate from D-glyceraldehyde 3-phosphate: step 3/5. Functionally, catalyzes the interconversion of 2-phosphoglycerate and 3-phosphoglycerate. This Lachnoclostridium phytofermentans (strain ATCC 700394 / DSM 18823 / ISDg) (Clostridium phytofermentans) protein is 2,3-bisphosphoglycerate-independent phosphoglycerate mutase.